Consider the following 588-residue polypeptide: Cation channel sperm-associated protein 2 (588 aa).

Over 1–106 (MAQEQGHFQL…LWAGWVLDSS (106 aa)) the chain is Cytoplasmic. The helical transmembrane segment at 107–129 (VFSKFIISLIFLNTFVLMVEIEL) threads the bilayer. Residues 130–138 (MESTNTALW) lie on the Extracellular side of the membrane. A helical transmembrane segment spans residues 139–164 (PVKLALEVADWFILLSFIVEILLMWL). The Cytoplasmic segment spans residues 165-173 (ASFSLFWKD). The helical transmembrane segment at 174-198 (AWNVFDFFVTLLSLLPELVVLLGVP) threads the bilayer. The Extracellular segment spans residues 199-201 (AHS). Residues 202–220 (VWLQLLRVCRVLRSLKLFA) traverse the membrane as a helical segment. Over 221-237 (RFRQIKVILLALVRALK) the chain is Cytoplasmic. The chain crosses the membrane as a helical span at residues 238-260 (SMTFLLMLLLIFFYIFAVTGVYF). Residues 261–279 (FREYSRSTIEGLEYNMFFS) are Extracellular-facing. An intramembrane region (helical; Pore-forming) is located at residues 280-292 (DLLNSLVTVFILF). Topologically, residues 293 to 312 (TLDHWYAVLQDIWKVPESSR) are extracellular. A helical transmembrane segment spans residues 313 to 339 (VFSSIYVILWLLLGSIIFRNIIVAMMV). The Cytoplasmic portion of the chain corresponds to 340-588 (TNFQNIRSEL…VQALMSFEDK (249 aa)). The interval 376 to 512 (SESLRGTSLG…YPVSHSISSH (137 aa)) is disordered. Residues 390–439 (DIIETSDASDDDDDDDDDDDDDDDDDDDKSDATESDNEESDSENSESENS) show a composition bias toward acidic residues. Over residues 440-502 (ESEKIDPEKD…KVKEESKEKA (63 aa)) the composition is skewed to basic and acidic residues.

This sequence belongs to the cation channel sperm-associated (TC 1.A.1.19) family. Component of the CatSper complex or CatSpermasome composed of the core pore-forming members CATSPER1, CATSPER2, CATSPER3 and CATSPER4 as well as auxiliary members CATSPERB, CATSPERG2, CATSPERD, CATSPERE, CATSPERZ, C2CD6/CATSPERT, SLCO6C1, TMEM249, TMEM262 and EFCAB9. HSPA1 may be an additional auxiliary complex member. The core complex members CATSPER1, CATSPER2, CATSPER3 and CATSPER4 form a heterotetrameric channel. The auxiliary CATSPERB, CATSPERG2, CATSPERD and CATSPERE subunits form a pavilion-like structure over the pore which stabilizes the complex through interactions with CATSPER4, CATSPER3, CATSPER1 and CATSPER2 respectively. SLCO6C1 interacts with CATSPERE and TMEM262/CATSPERH interacts with CATSPERB, further stabilizing the complex. C2CD6/CATSPERT interacts at least with CATSPERD and is required for targeting the CatSper complex in the flagellar membrane. Interacts with Ca(v)3.3/CACNA1I, leading to suppression of T-type calcium channel activity. In terms of tissue distribution, testis-specific.

The protein localises to the cell projection. It localises to the cilium. The protein resides in the flagellum membrane. The enzyme catalyses Ca(2+)(in) = Ca(2+)(out). With respect to regulation, in contrast to the human ortholog, not activated by progesterone. Activated by intracellular alkalinization. Functionally, pore-forming subunit of the CatSper complex, a sperm-specific voltage-gated calcium channel that plays a central role in sperm cell hyperactivation. Controls calcium entry to mediate the hyperactivated motility, a step needed for sperm motility which is essential late in the preparation of sperm for fertilization. The sequence is that of Cation channel sperm-associated protein 2 (Catsper2) from Mus musculus (Mouse).